Reading from the N-terminus, the 435-residue chain is ATP-dependent protease ATPase subunit HslU (435 aa).

Residues V18, 60–65 (GVGKTE), D248, E313, and R385 contribute to the ATP site.

It belongs to the ClpX chaperone family. HslU subfamily. In terms of assembly, a double ring-shaped homohexamer of HslV is capped on each side by a ring-shaped HslU homohexamer. The assembly of the HslU/HslV complex is dependent on binding of ATP.

It is found in the cytoplasm. In terms of biological role, ATPase subunit of a proteasome-like degradation complex; this subunit has chaperone activity. The binding of ATP and its subsequent hydrolysis by HslU are essential for unfolding of protein substrates subsequently hydrolyzed by HslV. HslU recognizes the N-terminal part of its protein substrates and unfolds these before they are guided to HslV for hydrolysis. The sequence is that of ATP-dependent protease ATPase subunit HslU from Azorhizobium caulinodans (strain ATCC 43989 / DSM 5975 / JCM 20966 / LMG 6465 / NBRC 14845 / NCIMB 13405 / ORS 571).